Here is a 971-residue protein sequence, read N- to C-terminus: Nuclear factor NF-kappa-B p110 subunit (971 aa).

The segment covering 23-41 (STSGYSSSTSPNSTNRSFS) has biased composition (low complexity). Positions 23–46 (STSGYSSSTSPNSTNRSFSPAHSP) are disordered. The region spanning 147–339 (KHVPQLRIVE…NAINNRKSAQ (193 aa)) is the RHD domain. Residue Ser-431 is modified to Phosphoserine; by PKA. A Nuclear localization signal motif is present at residues 452–457 (SRKRRR). Positions 453–496 (RKRRRTGSSANSSSSGTESSNNSLDLPKTLGLAQPPNGLPNLSQ) are disordered. Low complexity predominate over residues 460–475 (SSANSSSSGTESSNNS). A Phosphothreonine modification is found at Thr-620. Tyr-626 bears the Phosphotyrosine mark. ANK repeat units lie at residues 640–669 (DGDS…NPNL), 673–702 (AGNT…TVQL), 710–740 (DGLT…SISV), 745–775 (DGNN…NLTD), and 783–812 (AGHT…EKGE). The disordered stretch occupies residues 826-877 (IDSSSDESSDAGQLEIKSEEMDIETKDEDSVELDLSSGPRRQKDESSRDTEM). Residues 866–877 (RQKDESSRDTEM) show a composition bias toward basic and acidic residues. At Ser-950 the chain carries Phosphoserine.

As to quaternary structure, rel-p68 subunit interacts with Dredd. Interacts with DMAP1. Interacts with akirin; interaction is immune stimulation-dependent; activates selected rel target gene promoters. In terms of processing, phosphorylated by lipopolysaccharide (LPS)-activated I-kappa-B kinase complex before being cleaved. Rel-p110 subunit is cleaved within seconds of an immune challenge into Rel-p49 subunit and Rel-p68 subunit. Rel-p110 subunit reappears after 45 minutes.

It is found in the nucleus. Its subcellular location is the cytoplasm. In terms of biological role, transcription factor that plays a key role in the humoral immune response as part of the peptidoglycan recognition protein (IMD) signaling pathway. Rel-p68 subunit translocates to the nucleus where it binds to the promoter of the Cecropin A1 gene and probably other antimicrobial peptide genes. I-kappa-B kinase complex (IKKbeta and key) and PGRP-LC are essential signaling components in transmitting the lipopolysaccharide (LPS) signal leading to cact degradation for NF-kappa-B (rel) activation. Part of a Toll-related receptor pathway that functions in the apoptosis of unfit cells during cell competition. Also part of some antiviral immunity: activated downstream of Sting signaling, which detects double-stranded RNA (dsRNA) from viruses, and promotes expression of antiviral effector genes. May be part of a NF-kappa-B and Tollo signaling cascade that regulates development of the peripheral nervous system. Possibly post-transcriptionally regulates the neuron-specific genes sc and ase, by promoting the rapid turnover of their transcripts in the wing imaginal disk. This is Nuclear factor NF-kappa-B p110 subunit from Drosophila melanogaster (Fruit fly).